We begin with the raw amino-acid sequence, 349 residues long: Fe(3+) ions import ATP-binding protein FbpC (349 aa).

The ABC transporter domain occupies 4 to 236 (LELHHIGKSY…PVDEPTATFL (233 aa)). An ATP-binding site is contributed by 36–43 (GPSGSGKT).

The protein belongs to the ABC transporter superfamily. Fe(3+) ion importer (TC 3.A.1.10) family. In terms of assembly, the complex is composed of two ATP-binding proteins (FbpC), two transmembrane proteins (FbpB) and a solute-binding protein (FbpA).

It is found in the cell inner membrane. The catalysed reaction is Fe(3+)(out) + ATP + H2O = Fe(3+)(in) + ADP + phosphate + H(+). Functionally, part of the ABC transporter complex FbpABC involved in Fe(3+) ions import. Responsible for energy coupling to the transport system. The protein is Fe(3+) ions import ATP-binding protein FbpC of Yersinia pseudotuberculosis serotype I (strain IP32953).